We begin with the raw amino-acid sequence, 255 residues long: tRNA pseudouridine synthase A (255 aa).

The Nucleophile role is filled by Asp-43. A substrate-binding site is contributed by Tyr-94.

Belongs to the tRNA pseudouridine synthase TruA family.

It carries out the reaction uridine(38/39/40) in tRNA = pseudouridine(38/39/40) in tRNA. Functionally, formation of pseudouridine at positions 38, 39 and 40 in the anticodon stem and loop of transfer RNAs. In Pyrobaculum neutrophilum (strain DSM 2338 / JCM 9278 / NBRC 100436 / V24Sta) (Thermoproteus neutrophilus), this protein is tRNA pseudouridine synthase A.